Here is a 269-residue protein sequence, read N- to C-terminus: 4-hydroxy-tetrahydrodipicolinate reductase (269 aa).

Residues 9–14 (GCAGKM), Asp35, 102–104 (GTT), and 128–131 (APNF) contribute to the NAD(+) site. The active-site Proton donor/acceptor is His158. Position 159 (His159) interacts with (S)-2,3,4,5-tetrahydrodipicolinate. Catalysis depends on Lys162, which acts as the Proton donor. (S)-2,3,4,5-tetrahydrodipicolinate is bound at residue 168-169 (GT).

Belongs to the DapB family.

The protein resides in the cytoplasm. The enzyme catalyses (S)-2,3,4,5-tetrahydrodipicolinate + NAD(+) + H2O = (2S,4S)-4-hydroxy-2,3,4,5-tetrahydrodipicolinate + NADH + H(+). It catalyses the reaction (S)-2,3,4,5-tetrahydrodipicolinate + NADP(+) + H2O = (2S,4S)-4-hydroxy-2,3,4,5-tetrahydrodipicolinate + NADPH + H(+). It participates in amino-acid biosynthesis; L-lysine biosynthesis via DAP pathway; (S)-tetrahydrodipicolinate from L-aspartate: step 4/4. In terms of biological role, catalyzes the conversion of 4-hydroxy-tetrahydrodipicolinate (HTPA) to tetrahydrodipicolinate. The protein is 4-hydroxy-tetrahydrodipicolinate reductase of Gloeobacter violaceus (strain ATCC 29082 / PCC 7421).